An 89-amino-acid chain; its full sequence is Small ribosomal subunit protein uS14A (89 aa).

Belongs to the universal ribosomal protein uS14 family. As to quaternary structure, contacts proteins S3 and S10. Part of the 30S ribosomal subunit.

Its function is as follows. Binds 16S rRNA, required for the assembly of 30S particles and may also be responsible for determining the conformation of the 16S rRNA at the A site. Non-essential protein. A second form of uS14, it can integrate into the 30S subunit where it partially compensates for loss of the major uS14 protein (AC P12878) in restoring 70S formation, although it does not seem to be incorporated into the ribosome as well as the major uS14. In Bacillus subtilis (strain 168), this protein is Small ribosomal subunit protein uS14A.